We begin with the raw amino-acid sequence, 37 residues long: Large ribosomal subunit protein bL36 (37 aa).

This sequence belongs to the bacterial ribosomal protein bL36 family.

The polypeptide is Large ribosomal subunit protein bL36 (rpmJ) (Oleidesulfovibrio alaskensis (strain ATCC BAA-1058 / DSM 17464 / G20) (Desulfovibrio alaskensis)).